Here is a 404-residue protein sequence, read N- to C-terminus: Cysteine desulfurase IscS (404 aa).

Pyridoxal 5'-phosphate is bound by residues 73-74 (AT), Asn-153, Gln-181, and 201-203 (SAH). Lys-204 carries the post-translational modification N6-(pyridoxal phosphate)lysine. Position 241 (Thr-241) interacts with pyridoxal 5'-phosphate. Cys-327 (cysteine persulfide intermediate) is an active-site residue. Position 327 (Cys-327) interacts with [2Fe-2S] cluster.

This sequence belongs to the class-V pyridoxal-phosphate-dependent aminotransferase family. NifS/IscS subfamily. As to quaternary structure, homodimer. Forms a heterotetramer with IscU, interacts with other sulfur acceptors. Requires pyridoxal 5'-phosphate as cofactor.

It localises to the cytoplasm. It carries out the reaction (sulfur carrier)-H + L-cysteine = (sulfur carrier)-SH + L-alanine. It participates in cofactor biosynthesis; iron-sulfur cluster biosynthesis. Master enzyme that delivers sulfur to a number of partners involved in Fe-S cluster assembly, tRNA modification or cofactor biosynthesis. Catalyzes the removal of elemental sulfur atoms from cysteine to produce alanine. Functions as a sulfur delivery protein for Fe-S cluster synthesis onto IscU, an Fe-S scaffold assembly protein, as well as other S acceptor proteins. The protein is Cysteine desulfurase IscS of Anaeromyxobacter sp. (strain K).